A 252-amino-acid polypeptide reads, in one-letter code: Phosphoglycolate phosphatase (252 aa).

Catalysis depends on aspartate 13, which acts as the Nucleophile. Mg(2+) is bound by residues aspartate 13, aspartate 15, and aspartate 192.

It belongs to the HAD-like hydrolase superfamily. CbbY/CbbZ/Gph/YieH family. In terms of assembly, monomer. Mg(2+) serves as cofactor. The cofactor is chloride.

It catalyses the reaction 2-phosphoglycolate + H2O = glycolate + phosphate. It participates in organic acid metabolism; glycolate biosynthesis; glycolate from 2-phosphoglycolate: step 1/1. Its function is as follows. Specifically catalyzes the dephosphorylation of 2-phosphoglycolate. Is involved in the dissimilation of the intracellular 2-phosphoglycolate formed during the DNA repair of 3'-phosphoglycolate ends, a major class of DNA lesions induced by oxidative stress. The chain is Phosphoglycolate phosphatase from Escherichia coli O157:H7.